The following is a 281-amino-acid chain: Beta-etherase (281 aa).

The region spanning 11 to 87 (DLQLESGCTI…YLDEKYPDRP (77 aa)) is the GST N-terminal domain. Positions 244–281 (GDPEPFVRQTGPAGAGGQALNKGPQTTKMPPRVAEKAD) are disordered.

It belongs to the GST superfamily.

It localises to the cell inner membrane. In terms of biological role, able to degrade various dimeric lignin compounds. Catalyzes the unique and reductive cleavage of arylglycerol-beta-aryl ether. The sequence is that of Beta-etherase (ligE) from Sphingobium sp. (strain NBRC 103272 / SYK-6).